We begin with the raw amino-acid sequence, 727 residues long: Fatty acid oxidation complex subunit alpha (727 aa).

The segment at 16–205 (NQTASVFSFD…RLGLVDDAVP (190 aa)) is enoyl-CoA hydratase. Positions 321–727 (AKIKHVGILG…MAEQNKSFYP (407 aa)) are 3-hydroxyacyl-CoA dehydrogenase.

In the N-terminal section; belongs to the enoyl-CoA hydratase/isomerase family. It in the central section; belongs to the 3-hydroxyacyl-CoA dehydrogenase family. As to quaternary structure, heterotetramer of two alpha chains (FadJ) and two beta chains (FadI).

Its subcellular location is the cytoplasm. It carries out the reaction a (3S)-3-hydroxyacyl-CoA = a (2E)-enoyl-CoA + H2O. It catalyses the reaction a 4-saturated-(3S)-3-hydroxyacyl-CoA = a (3E)-enoyl-CoA + H2O. The enzyme catalyses a (3S)-3-hydroxyacyl-CoA + NAD(+) = a 3-oxoacyl-CoA + NADH + H(+). The catalysed reaction is (3S)-3-hydroxybutanoyl-CoA = (3R)-3-hydroxybutanoyl-CoA. Its pathway is lipid metabolism; fatty acid beta-oxidation. Catalyzes the formation of a hydroxyacyl-CoA by addition of water on enoyl-CoA. Also exhibits 3-hydroxyacyl-CoA epimerase and 3-hydroxyacyl-CoA dehydrogenase activities. This is Fatty acid oxidation complex subunit alpha from Photorhabdus laumondii subsp. laumondii (strain DSM 15139 / CIP 105565 / TT01) (Photorhabdus luminescens subsp. laumondii).